The primary structure comprises 511 residues: MKDNKIIIFDTTLRDGEQALGSSLGINQKLQIALALENLGVDVIEAGFPVSSQGDFKAVQKIASKVKNSTICALSRVLDKDIDMAYEALKVAKHFRIHTFIATSTLHMQDKLKKDFDEILSMAKRAIIRARSYTDDVEFSCEDAGRTPIDNLCFMVENAIKAGAKTINIPDTVGYTLPSEFANIIKILFNKVPNIDKAIISVHCHNDLGMATGNSLSAILQGARQIECTINGLGERAGNCALEEVVMAIKTRKDYLKGFYTDIKCENIFKTSKLVSAITNESIPSHKAIVGSNAFSHSSGIHQDGVLKNRQTYEIISPSAIGIHENRMLMTARSGRAMIKTCLENLGYDENTYNLDDVYERFLRLADKKGQVYDYDLEALMFLSYENEEENKFILEKLSVISGNIPTACVCMRIKEELKTEACTGNGPVEAVFNCIARITNLKPALKAYSINAKSSGVDAQGQVDVDLEFKGRKFHGKGISTDVIEASAQAFVSAYNAIYRSLKVEERKMA.

One can recognise a Pyruvate carboxyltransferase domain in the interval 6–269 (IIIFDTTLRD…YTDIKCENIF (264 aa)). Positions 15, 203, 205, and 239 each coordinate Mn(2+). The interval 394 to 511 (ILEKLSVISG…SLKVEERKMA (118 aa)) is regulatory domain.

It belongs to the alpha-IPM synthase/homocitrate synthase family. LeuA type 1 subfamily. Homodimer. Mn(2+) serves as cofactor.

The protein localises to the cytoplasm. It carries out the reaction 3-methyl-2-oxobutanoate + acetyl-CoA + H2O = (2S)-2-isopropylmalate + CoA + H(+). It functions in the pathway amino-acid biosynthesis; L-leucine biosynthesis; L-leucine from 3-methyl-2-oxobutanoate: step 1/4. Its function is as follows. Catalyzes the condensation of the acetyl group of acetyl-CoA with 3-methyl-2-oxobutanoate (2-ketoisovalerate) to form 3-carboxy-3-hydroxy-4-methylpentanoate (2-isopropylmalate). In Campylobacter jejuni subsp. jejuni serotype O:6 (strain 81116 / NCTC 11828), this protein is 2-isopropylmalate synthase.